Consider the following 124-residue polypeptide: UPF0231 protein SO_3983 (124 aa).

The protein belongs to the UPF0231 family.

The protein is UPF0231 protein SO_3983 of Shewanella oneidensis (strain ATCC 700550 / JCM 31522 / CIP 106686 / LMG 19005 / NCIMB 14063 / MR-1).